The sequence spans 216 residues: Probable nicotinate-nucleotide adenylyltransferase (216 aa).

It belongs to the NadD family.

The catalysed reaction is nicotinate beta-D-ribonucleotide + ATP + H(+) = deamido-NAD(+) + diphosphate. The protein operates within cofactor biosynthesis; NAD(+) biosynthesis; deamido-NAD(+) from nicotinate D-ribonucleotide: step 1/1. Functionally, catalyzes the reversible adenylation of nicotinate mononucleotide (NaMN) to nicotinic acid adenine dinucleotide (NaAD). This chain is Probable nicotinate-nucleotide adenylyltransferase, found in Geotalea daltonii (strain DSM 22248 / JCM 15807 / FRC-32) (Geobacter daltonii).